A 220-amino-acid polypeptide reads, in one-letter code: Uracil-DNA glycosylase (220 aa).

Aspartate 60 serves as the catalytic Proton acceptor.

Belongs to the uracil-DNA glycosylase (UDG) superfamily. UNG family.

The protein localises to the cytoplasm. The enzyme catalyses Hydrolyzes single-stranded DNA or mismatched double-stranded DNA and polynucleotides, releasing free uracil.. Excises uracil residues from the DNA which can arise as a result of misincorporation of dUMP residues by DNA polymerase or due to deamination of cytosine. The sequence is that of Uracil-DNA glycosylase from Francisella tularensis subsp. tularensis (strain FSC 198).